A 433-amino-acid polypeptide reads, in one-letter code: Coiled-coil domain-containing protein 71 (433 aa).

Position 125 is a phosphoserine (S125). 3 disordered regions span residues 204–256 (LKVR…GCSA), 284–310 (QTKT…KAAV), and 325–396 (KAAQ…RKSQ). 2 stretches are compositionally biased toward basic residues: residues 216 to 230 (KAPR…KHLT) and 288 to 306 (VRVR…RAKA). The stretch at 260 to 330 (KTVQAQASQT…QAKAKAAQTK (71 aa)) forms a coiled coil.

This is Coiled-coil domain-containing protein 71 (Ccdc71) from Mus musculus (Mouse).